We begin with the raw amino-acid sequence, 217 residues long: Large ribosomal subunit protein uL3 (217 aa).

The segment at 129 to 161 is disordered; that stretch reads SRGPMSHGSKNHRAPGSTGAGTTPGRIYPGKRM. Residues 142 to 153 are compositionally biased toward low complexity; the sequence is APGSTGAGTTPG.

Belongs to the universal ribosomal protein uL3 family. As to quaternary structure, part of the 50S ribosomal subunit. Forms a cluster with proteins L14 and L19.

One of the primary rRNA binding proteins, it binds directly near the 3'-end of the 23S rRNA, where it nucleates assembly of the 50S subunit. The sequence is that of Large ribosomal subunit protein uL3 from Prochlorococcus marinus subsp. pastoris (strain CCMP1986 / NIES-2087 / MED4).